A 41-amino-acid chain; its full sequence is Photosystem II reaction center protein Y (41 aa).

A helical membrane pass occupies residues 7 to 25; that stretch reads IAIVLAPVVIAASWAVFNI.

This sequence belongs to the PsbY family. In terms of assembly, PSII is composed of 1 copy each of membrane proteins PsbA, PsbB, PsbC, PsbD, PsbE, PsbF, PsbH, PsbI, PsbJ, PsbK, PsbL, PsbM, PsbT, PsbX, PsbY, PsbZ, Psb30/Ycf12, peripheral proteins PsbO, CyanoQ (PsbQ), PsbU, PsbV and a large number of cofactors. It forms dimeric complexes.

Its subcellular location is the cellular thylakoid membrane. In terms of biological role, loosely associated component of the core of photosystem II (PSII), it is not always seen in crystals. PSII is a light-driven water plastoquinone oxidoreductase, using light energy to abstract electrons from H(2)O, generating a proton gradient subsequently used for ATP formation. This chain is Photosystem II reaction center protein Y, found in Nostoc punctiforme (strain ATCC 29133 / PCC 73102).